Consider the following 515-residue polypeptide: Putative asparagine synthetase [glutamine-hydrolyzing] 2 (515 aa).

The For GATase activity role is filled by Cys2. The region spanning 2–229 is the Glutamine amidotransferase type-2 domain; it reads CGINGIIRFG…ARQNLIFDLD (228 aa). Residues 52-56, 92-94, and Asp114 contribute to the L-glutamine site; these read RLAIL and NGE. Residues Ile306 and 378 to 379 contribute to the ATP site; that span reads SG.

The protein belongs to the asparagine synthetase family.

It carries out the reaction L-aspartate + L-glutamine + ATP + H2O = L-asparagine + L-glutamate + AMP + diphosphate + H(+). It functions in the pathway amino-acid biosynthesis; L-asparagine biosynthesis; L-asparagine from L-aspartate (L-Gln route): step 1/1. This Methanocaldococcus jannaschii (strain ATCC 43067 / DSM 2661 / JAL-1 / JCM 10045 / NBRC 100440) (Methanococcus jannaschii) protein is Putative asparagine synthetase [glutamine-hydrolyzing] 2.